We begin with the raw amino-acid sequence, 333 residues long: Ephrin-B2 (333 aa).

The signal sequence occupies residues 1 to 27 (MAVRRDSVWKYCWGVLMVLCRTAISKS). One can recognise an Ephrin RBD domain in the interval 28–164 (IVLEPIYWNS…TRAMKILMKV (137 aa)). Topologically, residues 28 to 229 (IVLEPIYWNS…ILGSEVALFA (202 aa)) are extracellular. N-linked (GlcNAc...) asparagine glycosylation occurs at Asn36. Cystine bridges form between Cys62-Cys101 and Cys89-Cys153. N-linked (GlcNAc...) asparagine glycosylation occurs at Asn139. A disordered region spans residues 165–213 (GQDASSAGSTRNKDPTRRPELEAGTNGRSSTTSPFVKPNPGSSTDGNSA). The span at 175–185 (RNKDPTRRPEL) shows a compositional bias: basic and acidic residues. Over residues 190 to 213 (NGRSSTTSPFVKPNPGSSTDGNSA) the composition is skewed to polar residues. The helical transmembrane segment at 230–250 (GIASGCIIFIVIIITLVVLLL) threads the bilayer. Over 251 to 333 (KYRRRHRKHS…QSPANIYYKV (83 aa)) the chain is Cytoplasmic. Position 260 is a phosphoserine (Ser260). The residue at position 274 (Thr274) is a Phosphothreonine. Arg277 carries the post-translational modification Omega-N-methylarginine. The short motif at 331–333 (YKV) is the PDZ-binding element.

The protein belongs to the ephrin family. Interacts with PDZRN3. Binds to the receptor tyrosine kinases EPHA4, EPHB4 and EPHA3. In terms of assembly, (Microbial infection) Interacts with Hendra virus and Nipah virus G protein. Post-translationally, inducible phosphorylation of tyrosine residues in the cytoplasmic domain. In terms of tissue distribution, lung and kidney.

Its subcellular location is the cell membrane. It localises to the cell junction. It is found in the adherens junction. Cell surface transmembrane ligand for Eph receptors, a family of receptor tyrosine kinases which are crucial for migration, repulsion and adhesion during neuronal, vascular and epithelial development. Binds promiscuously Eph receptors residing on adjacent cells, leading to contact-dependent bidirectional signaling into neighboring cells. The signaling pathway downstream of the receptor is referred to as forward signaling while the signaling pathway downstream of the ephrin ligand is referred to as reverse signaling. Binds to receptor tyrosine kinase including EPHA4, EPHA3 and EPHB4. Together with EPHB4 plays a central role in heart morphogenesis and angiogenesis through regulation of cell adhesion and cell migration. EPHB4-mediated forward signaling controls cellular repulsion and segregation from EFNB2-expressing cells. May play a role in constraining the orientation of longitudinally projecting axons. In terms of biological role, (Microbial infection) Acts as a receptor for Hendra virus and Nipah virus. The chain is Ephrin-B2 (EFNB2) from Homo sapiens (Human).